The sequence spans 323 residues: Cuticle collagen 39 (323 aa).

A signal peptide spans 1-28 (MTGPTCLAVVAGISGVFVFGALFSVAQI). Over residues 80–89 (QCNCGPQASN) the composition is skewed to polar residues. The segment at 80 to 293 (QCNCGPQASN…GAAEQGYRHR (214 aa)) is disordered. 3 triple-helical region regions span residues 93-125 (GPPG…AGPK), 138-200 (GSPG…GGQR), and 203-265 (GLPG…PGAD). Gly residues predominate over residues 108 to 117 (GQPGGAGNPG). Positions 136-146 (PAGSPGPAGAP) are enriched in low complexity. Gly residues predominate over residues 159–168 (GHPGQGGSQG). Positions 169 to 191 (PAGPRGPAGDAGAPGQVGAPGNP) are enriched in low complexity. A compositionally biased stretch (gly residues) spans 224 to 233 (GQSGGQGQQG). Positions 234–267 (PAGPAGPDGQPGQPGQDGQAGAPGNDGAPGADAA) are enriched in low complexity.

This sequence belongs to the cuticular collagen family. Collagen polypeptide chains are complexed within the cuticle by disulfide bonds and other types of covalent cross-links.

Its function is as follows. Nematode cuticles are composed largely of collagen-like proteins. The cuticle functions both as an exoskeleton and as a barrier to protect the worm from its environment. In Caenorhabditis elegans, this protein is Cuticle collagen 39 (col-39).